A 259-amino-acid chain; its full sequence is Eukaryotic translation initiation factor 3 subunit G-2 (259 aa).

Residues Ser179–Pro257 form the RRM domain.

It belongs to the eIF-3 subunit G family. Component of the eukaryotic translation initiation factor 3 (eIF-3) complex. The eIF-3 complex interacts with pix.

It localises to the cytoplasm. In terms of biological role, RNA-binding component of the eukaryotic translation initiation factor 3 (eIF-3) complex, which is involved in protein synthesis of a specialized repertoire of mRNAs and, together with other initiation factors, stimulates binding of mRNA and methionyl-tRNAi to the 40S ribosome. The eIF-3 complex specifically targets and initiates translation of a subset of mRNAs involved in cell proliferation. This subunit can bind 18S rRNA. The polypeptide is Eukaryotic translation initiation factor 3 subunit G-2 (Drosophila mojavensis (Fruit fly)).